A 112-amino-acid polypeptide reads, in one-letter code: Urease subunit gamma (112 aa).

It belongs to the urease gamma subunit family. As to quaternary structure, heterotrimer of UreA (gamma), UreB (beta) and UreC (alpha) subunits. Three heterotrimers associate to form the active enzyme.

It is found in the cytoplasm. It carries out the reaction urea + 2 H2O + H(+) = hydrogencarbonate + 2 NH4(+). The protein operates within nitrogen metabolism; urea degradation; CO(2) and NH(3) from urea (urease route): step 1/1. The chain is Urease subunit gamma from Gloeothece citriformis (strain PCC 7424) (Cyanothece sp. (strain PCC 7424)).